The chain runs to 95 residues: Blastocyst protein 4 (95 aa).

Residues 1-20 (MGAVFAIIGGFALDSPILRL) form the signal peptide.

The chain is Blastocyst protein 4 from Oryctolagus cuniculus (Rabbit).